The chain runs to 673 residues: DNA ligase (673 aa).

34–38 (DAAFD) is a binding site for NAD(+). The interval 54–73 (LRRPDSPTQRVGGATAPDFA) is disordered. NAD(+)-binding positions include 83–84 (SL) and Glu-114. Lys-116 acts as the N6-AMP-lysine intermediate in catalysis. NAD(+)-binding residues include Arg-137, Glu-176, Lys-292, and Lys-316. 4 residues coordinate Zn(2+): Cys-410, Cys-413, Cys-428, and Cys-433. Positions 594-673 (PAEGPLAGMT…DEFCERYLQG (80 aa)) constitute a BRCT domain.

This sequence belongs to the NAD-dependent DNA ligase family. LigA subfamily. Mg(2+) serves as cofactor. The cofactor is Mn(2+).

It catalyses the reaction NAD(+) + (deoxyribonucleotide)n-3'-hydroxyl + 5'-phospho-(deoxyribonucleotide)m = (deoxyribonucleotide)n+m + AMP + beta-nicotinamide D-nucleotide.. In terms of biological role, DNA ligase that catalyzes the formation of phosphodiester linkages between 5'-phosphoryl and 3'-hydroxyl groups in double-stranded DNA using NAD as a coenzyme and as the energy source for the reaction. It is essential for DNA replication and repair of damaged DNA. The protein is DNA ligase of Symbiobacterium thermophilum (strain DSM 24528 / JCM 14929 / IAM 14863 / T).